The chain runs to 1058 residues: Carbamoyl phosphate synthase large chain (1058 aa).

Residues 1–401 are carboxyphosphate synthetic domain; the sequence is MAKRTDIKKI…CLLKACRSLE (401 aa). R129, R169, G175, G176, R208, I210, E215, G241, I242, H243, Q284, and E298 together coordinate ATP. An ATP-grasp 1 domain is found at 133 to 327; sequence KQLMKELGEP…IAKIAAKIAV (195 aa). Residues Q284, E298, and N300 each contribute to the Mg(2+) site. Positions 284, 298, and 300 each coordinate Mn(2+). The oligomerization domain stretch occupies residues 402–546; that stretch reads IGVDHNELKG…YSTYEWENES (145 aa). The tract at residues 547–929 is carbamoyl phosphate synthetic domain; that stretch reads IKSEKESVIV…ALYKAFEASY (383 aa). Residues 671–861 enclose the ATP-grasp 2 domain; sequence EKALKDLGIP…MAQVATKLIL (191 aa). The ATP site is built by R707, S746, I748, E752, G777, V778, H779, S780, Q820, and E832. Residues Q820, E832, and N834 each contribute to the Mg(2+) site. Residues Q820, E832, and N834 each coordinate Mn(2+). One can recognise an MGS-like domain in the interval 930–1058; the sequence is LHMPEYGTIV…ESRTFSIEAI (129 aa). An allosteric domain region spans residues 930–1058; it reads LHMPEYGTIV…ESRTFSIEAI (129 aa).

It belongs to the CarB family. As to quaternary structure, composed of two chains; the small (or glutamine) chain promotes the hydrolysis of glutamine to ammonia, which is used by the large (or ammonia) chain to synthesize carbamoyl phosphate. Tetramer of heterodimers (alpha,beta)4. Mg(2+) serves as cofactor. Mn(2+) is required as a cofactor.

The enzyme catalyses hydrogencarbonate + L-glutamine + 2 ATP + H2O = carbamoyl phosphate + L-glutamate + 2 ADP + phosphate + 2 H(+). The catalysed reaction is hydrogencarbonate + NH4(+) + 2 ATP = carbamoyl phosphate + 2 ADP + phosphate + 2 H(+). The protein operates within amino-acid biosynthesis; L-arginine biosynthesis; carbamoyl phosphate from bicarbonate: step 1/1. It participates in pyrimidine metabolism; UMP biosynthesis via de novo pathway; (S)-dihydroorotate from bicarbonate: step 1/3. Functionally, large subunit of the glutamine-dependent carbamoyl phosphate synthetase (CPSase). CPSase catalyzes the formation of carbamoyl phosphate from the ammonia moiety of glutamine, carbonate, and phosphate donated by ATP, constituting the first step of 2 biosynthetic pathways, one leading to arginine and/or urea and the other to pyrimidine nucleotides. The large subunit (synthetase) binds the substrates ammonia (free or transferred from glutamine from the small subunit), hydrogencarbonate and ATP and carries out an ATP-coupled ligase reaction, activating hydrogencarbonate by forming carboxy phosphate which reacts with ammonia to form carbamoyl phosphate. The polypeptide is Carbamoyl phosphate synthase large chain (Streptococcus equi subsp. zooepidemicus (strain H70)).